The following is a 227-amino-acid chain: Ribose-5-phosphate isomerase A (227 aa).

Residues 26-29 (TGST), 82-85 (DGAD), and 95-98 (KGGG) contribute to the substrate site. Residue glutamate 104 is the Proton acceptor of the active site. Lysine 122 lines the substrate pocket.

The protein belongs to the ribose 5-phosphate isomerase family. In terms of assembly, homodimer.

The enzyme catalyses aldehydo-D-ribose 5-phosphate = D-ribulose 5-phosphate. The protein operates within carbohydrate degradation; pentose phosphate pathway; D-ribose 5-phosphate from D-ribulose 5-phosphate (non-oxidative stage): step 1/1. In terms of biological role, catalyzes the reversible conversion of ribose-5-phosphate to ribulose 5-phosphate. The sequence is that of Ribose-5-phosphate isomerase A from Streptococcus equi subsp. equi (strain 4047).